The primary structure comprises 281 residues: Probable short-chain type dehydrogenase/reductase blr2146 (281 aa).

An NAD(+)-binding site is contributed by V10–V34. S146 provides a ligand contact to substrate. Y159 (proton acceptor) is an active-site residue. The interval G261 to C281 is disordered.

The protein belongs to the short-chain dehydrogenases/reductases (SDR) family.

In Bradyrhizobium diazoefficiens (strain JCM 10833 / BCRC 13528 / IAM 13628 / NBRC 14792 / USDA 110), this protein is Probable short-chain type dehydrogenase/reductase blr2146.